The following is a 195-amino-acid chain: Peptidyl-tRNA hydrolase (195 aa).

Tyrosine 17 provides a ligand contact to tRNA. Histidine 22 acts as the Proton acceptor in catalysis. The tRNA site is built by phenylalanine 68, asparagine 70, and asparagine 116.

The protein belongs to the PTH family. Monomer.

The protein resides in the cytoplasm. It carries out the reaction an N-acyl-L-alpha-aminoacyl-tRNA + H2O = an N-acyl-L-amino acid + a tRNA + H(+). Its function is as follows. Hydrolyzes ribosome-free peptidyl-tRNAs (with 1 or more amino acids incorporated), which drop off the ribosome during protein synthesis, or as a result of ribosome stalling. Functionally, catalyzes the release of premature peptidyl moieties from peptidyl-tRNA molecules trapped in stalled 50S ribosomal subunits, and thus maintains levels of free tRNAs and 50S ribosomes. The sequence is that of Peptidyl-tRNA hydrolase from Shewanella amazonensis (strain ATCC BAA-1098 / SB2B).